The following is a 289-amino-acid chain: Aquaporin PIP2-3 (289 aa).

Positions 1 to 25 (MAKQDIEASGPEAGEFSAKDYTDPP) are disordered. The next 2 membrane-spanning stretches (helical) occupy residues 43–63 (AVIA…ATVI) and 80–100 (CGGV…FILV). An NPA 1 motif is present at residues 112 to 114 (NPA). A run of 3 helical transmembrane segments spans residues 131–151 (LLYI…VKGF), 173–193 (GTGL…VFSA), and 207–227 (VLAP…TIPI). The NPA 2 signature appears at 233–235 (NPA). The helical transmembrane segment at 255–275 (IFWVGPLIGAAIAAAYHQYVL) threads the bilayer.

It belongs to the MIP/aquaporin (TC 1.A.8) family. PIP (TC 1.A.8.11) subfamily.

The protein localises to the cell membrane. Functionally, aquaporins facilitate the transport of water and small neutral solutes across cell membranes. The protein is Aquaporin PIP2-3 (PIP2-3) of Zea mays (Maize).